We begin with the raw amino-acid sequence, 358 residues long: Peptide chain release factor 1 (358 aa).

Gln233 carries the post-translational modification N5-methylglutamine.

The protein belongs to the prokaryotic/mitochondrial release factor family. Post-translationally, methylated by PrmC. Methylation increases the termination efficiency of RF1.

It is found in the cytoplasm. In terms of biological role, peptide chain release factor 1 directs the termination of translation in response to the peptide chain termination codons UAG and UAA. This chain is Peptide chain release factor 1, found in Staphylococcus aureus (strain MRSA252).